The primary structure comprises 296 residues: Beta-lactamase (296 aa).

A signal peptide spans 1-21; sequence MKAYFIAILTLFTCIATVVRA. Ser66 functions as the Acyl-ester intermediate in the catalytic mechanism. 235–237 contributes to the substrate binding site; sequence KTG.

The protein belongs to the class-A beta-lactamase family.

The catalysed reaction is a beta-lactam + H2O = a substituted beta-amino acid. In Bacteroides uniformis, this protein is Beta-lactamase (cblA).